The following is a 375-amino-acid chain: Growth/differentiation factor 8 (375 aa).

Residues 1-23 (MQKLQLCVYIYLFMLIVAGPVDL) form the signal peptide. The propeptide occupies 24 to 266 (NENSEQKENV…VTDTPKRSRR (243 aa)). An N-linked (GlcNAc...) asparagine glycan is attached at N71. 4 cysteine pairs are disulfide-bonded: C272–C282, C281–C340, C309–C372, and C313–C374.

This sequence belongs to the TGF-beta family. In terms of assembly, homodimer; disulfide-linked. Interacts with WFIKKN2, leading to inhibit its activity. Interacts with FSTL3. In terms of processing, synthesized as large precursor molecule that undergoes proteolytic cleavage to generate an N-terminal propeptide and a disulfide linked C-terminal dimer, which is the biologically active molecule. The circulating form consists of a latent complex of the C-terminal dimer and other proteins, including its propeptide, which maintain the C-terminal dimer in a latent, inactive state. Ligand activation requires additional cleavage of the prodomain by a tolloid-like metalloproteinase.

The protein resides in the secreted. Its function is as follows. Acts specifically as a negative regulator of skeletal muscle growth. This chain is Growth/differentiation factor 8 (MSTN), found in Papio hamadryas (Hamadryas baboon).